The sequence spans 278 residues: Envelope glycoprotein L (278 aa).

The first 30 residues, 1–30 (MCRRPDCGFSFSPGPVILLWCCLLLPIVSS), serve as a signal peptide directing secretion. Residues 43–256 (VPAECPELTR…DKYYAGLPPE (214 aa)) form the gL betaherpesvirus-type domain. Cysteines 154 and 159 form a disulfide.

Belongs to the herpesviridae glycoprotein L (gL) family. Betaherpesvirinae gL subfamily. As to quaternary structure, interacts with glycoprotein H (gH); this interaction is necessary for the correct processing and cell surface expression of gH. Forms the envelope pentamer complex (PC) composed of gH, gL, UL128, UL130, and UL131A. The pentamer interacts with host NRP2. Forms the envelope trimer complex composed of gH, gL, and gO. The trimer interacts with host PDGFRA. The trimer also interacts with host EPHA2.

The protein resides in the virion membrane. Its subcellular location is the host cell membrane. It localises to the host Golgi apparatus. It is found in the host trans-Golgi network. Its function is as follows. The heterodimer glycoprotein H-glycoprotein L is required for the fusion of viral and plasma membranes leading to virus entry into the host cell. Acts as a functional inhibitor of gH and maintains gH in an inhibited form. Upon binding to host integrins, gL dissociates from gH leading to activation of the viral fusion glycoproteins gB and gH. In human cytomegalovirus, forms two distincts complexes to mediate viral entry, a trimer and a pentamer at the surface of the virion envelope. The gH-gL-gO trimer is required for infection in fibroblasts by interacting with host PDGFRA, and in glioblastoma cells by interacting with host EPHA2. The gH-gL-UL128-UL130-UL131A pentamer is essential for viral entry in epithelial, endothelial and myeloid cells via interaction with host NRP2. This Homo sapiens (Human) protein is Envelope glycoprotein L.